The following is a 494-amino-acid chain: UDP-N-acetylmuramate--L-alanine ligase (494 aa).

Position 140-146 (140-146 (GTHGKTT)) interacts with ATP.

Belongs to the MurCDEF family.

The protein resides in the cytoplasm. It carries out the reaction UDP-N-acetyl-alpha-D-muramate + L-alanine + ATP = UDP-N-acetyl-alpha-D-muramoyl-L-alanine + ADP + phosphate + H(+). Its pathway is cell wall biogenesis; peptidoglycan biosynthesis. Functionally, cell wall formation. The polypeptide is UDP-N-acetylmuramate--L-alanine ligase (Nostoc sp. (strain PCC 7120 / SAG 25.82 / UTEX 2576)).